The primary structure comprises 126 residues: Fluoride-specific ion channel FluC 2 (126 aa).

The next 4 membrane-spanning stretches (helical) occupy residues 11 to 31 (IFLI…LCEL), 43 to 63 (VLGS…GFIG), 69 to 89 (AFGT…VQSF), and 93 to 113 (FFPA…GVFM). Na(+) contacts are provided by Gly-76 and Thr-79.

It belongs to the fluoride channel Fluc/FEX (TC 1.A.43) family.

The protein resides in the cell membrane. It catalyses the reaction fluoride(in) = fluoride(out). Its activity is regulated as follows. Na(+) is not transported, but it plays an essential structural role and its presence is essential for fluoride channel function. In terms of biological role, fluoride-specific ion channel. Important for reducing fluoride concentration in the cell, thus reducing its toxicity. This is Fluoride-specific ion channel FluC 2 from Methanosarcina barkeri (strain Fusaro / DSM 804).